The primary structure comprises 256 residues: Acetoacetate decarboxylase 3 (256 aa).

Lysine 110 serves as the catalytic Schiff-base intermediate with acetoacetate.

Belongs to the ADC family.

It carries out the reaction acetoacetate + H(+) = acetone + CO2. Its function is as follows. Catalyzes the conversion of acetoacetate to acetone and carbon dioxide. The sequence is that of Acetoacetate decarboxylase 3 from Mesorhizobium japonicum (strain LMG 29417 / CECT 9101 / MAFF 303099) (Mesorhizobium loti (strain MAFF 303099)).